We begin with the raw amino-acid sequence, 464 residues long: Arabinose-proton symporter (464 aa).

12 consecutive transmembrane segments (helical) span residues Gly21 to Val43, Gly63 to Asp85, Ile92 to Gln111, Leu116 to Ile138, Leu150 to Val172, Gly185 to Val207, Ala266 to Tyr288, Gly303 to Ile325, Lys332 to Phe354, Val364 to Ser386, Ala398 to Ile420, and Gly424 to Ile446.

It belongs to the major facilitator superfamily. Sugar transporter (TC 2.A.1.1) family.

Its subcellular location is the cell membrane. It catalyses the reaction L-arabinose(in) + H(+)(in) = L-arabinose(out) + H(+)(out). The catalysed reaction is D-galactose(in) + H(+)(in) = D-galactose(out) + H(+)(out). It carries out the reaction D-xylose(in) + H(+)(in) = D-xylose(out) + H(+)(out). Its function is as follows. Uptake of L-arabinose across the cytoplasmic membrane with the concomitant transport of protons into the cell (symport system). In the presence of inducing amounts of L-arabinose, can import both D-galactose and D-xylose. Can also transport the disaccharide alpha-1,5-arabinobiose. This is Arabinose-proton symporter (araE) from Bacillus subtilis (strain 168).